We begin with the raw amino-acid sequence, 312 residues long: Ribonuclease Z (312 aa).

His63, His65, Asp67, His68, His141, Asp212, and His270 together coordinate Zn(2+). Residue Asp67 is the Proton acceptor of the active site.

This sequence belongs to the RNase Z family. In terms of assembly, homodimer. The cofactor is Zn(2+).

It catalyses the reaction Endonucleolytic cleavage of RNA, removing extra 3' nucleotides from tRNA precursor, generating 3' termini of tRNAs. A 3'-hydroxy group is left at the tRNA terminus and a 5'-phosphoryl group is left at the trailer molecule.. Zinc phosphodiesterase, which displays some tRNA 3'-processing endonuclease activity. Probably involved in tRNA maturation, by removing a 3'-trailer from precursor tRNA. The protein is Ribonuclease Z of Lactobacillus helveticus (strain DPC 4571).